A 288-amino-acid chain; its full sequence is Protease HtpX (288 aa).

Transmembrane regions (helical) follow at residues 4 to 24 and 33 to 53; these read ILLF…ILTL and VGLL…SLLM. His139 lines the Zn(2+) pocket. Glu140 is a catalytic residue. His143 serves as a coordination point for Zn(2+). Transmembrane regions (helical) follow at residues 146–166 and 186–206; these read SGDM…VIFI and IYFM…SMIA. Zn(2+) is bound at residue Glu214.

Belongs to the peptidase M48B family. It depends on Zn(2+) as a cofactor.

The protein resides in the cell inner membrane. The protein is Protease HtpX of Histophilus somni (strain 2336) (Haemophilus somnus).